Reading from the N-terminus, the 638-residue chain is Rik1-associated factor 1 (638 aa).

4 WD repeats span residues 297–336, 486–525, 544–583, and 587–626; these read KEYSTISDLCFSKGNLFLYTGAFDNAVKVWDMEGNLCGIF, TTQKDINHATISNSGILVTSSGTDNQTFVWDSRKPDKPLS, EVDAGINMAQWQPKGNLFVTGGSDGIVKVWDLRLNNPFIQ, and EMNSAITYGGFSEDASKLTVCCVGGDVNMYSLGNDNGNKF.

In terms of assembly, component of the Clr4 methyltransferase complex (ClrC) composed of at least clr4, rik1, pcu4, rbx1, raf1 and raf2. The cullin pcu4, rik1, raf1, raf2 and the ring-box protein rbx1 are components of an E3 ubiquitin ligase, whose activity is essential for heterochromatin assembly. Interacts with nup189.

The protein resides in the cytoplasm. Its subcellular location is the nucleus. The protein localises to the chromosome. Functionally, component of the Clr4 methyltransferase complex (ClrC) which contributes to the establishment of heterochromatin by specifically methylating histone H3 to form H3K9me. ClrC preferentially ubiquitylates H3K14 and ClrC-mediated H3 ubiquitination promotes clr4 methyltransferase activity for the methylation of H3K9. H3K9me represents a specific tag for epigenetic transcriptional repression by recruiting swi6/HP1 to methylated histones which leads to transcriptional silencing within centromeric heterochromatin, telomeric regions and at the silent mating-type loci. Has a role in both mitotic and meiotic chromosome segregation. The chain is Rik1-associated factor 1 (raf1) from Schizosaccharomyces pombe (strain 972 / ATCC 24843) (Fission yeast).